A 294-amino-acid polypeptide reads, in one-letter code: MTKLIVICGATATGKSGLALNLAMRLGSVILSADSRQVYREFDIGTAKPTLAEQKAVPHYLIDICTPRETMTVADYQEQAQALINSLPVSPLLLVGGTGLYIRSIVQGMKIPRVAPNYELRSQLESLGQTTLYGILQQVDPVAAQKIHPHDPVRTLRAVEVFYVTGIPISAQQGENPPDYPILQIGLDCEMERLSERIHKRTEQMIADGLVGEVEYLCQKYGADLPLLNTLGYQEIKQYLAGEISLEAAKELIVLHTRQFAKRQRTWFRAYPQIEWFNADDADLLDIVWQRIQQ.

9–16 (GATATGKS) contacts ATP. Substrate is bound at residue 11–16 (TATGKS). The interval 34–37 (DSRQ) is interaction with substrate tRNA.

It belongs to the IPP transferase family. As to quaternary structure, monomer. Mg(2+) serves as cofactor.

The catalysed reaction is adenosine(37) in tRNA + dimethylallyl diphosphate = N(6)-dimethylallyladenosine(37) in tRNA + diphosphate. Its function is as follows. Catalyzes the transfer of a dimethylallyl group onto the adenine at position 37 in tRNAs that read codons beginning with uridine, leading to the formation of N6-(dimethylallyl)adenosine (i(6)A). The protein is tRNA dimethylallyltransferase of Trichormus variabilis (strain ATCC 29413 / PCC 7937) (Anabaena variabilis).